The primary structure comprises 375 residues: DNA replication and repair protein RecF (375 aa).

30–37 (GENAQGKT) lines the ATP pocket.

Belongs to the RecF family.

It is found in the cytoplasm. In terms of biological role, the RecF protein is involved in DNA metabolism; it is required for DNA replication and normal SOS inducibility. RecF binds preferentially to single-stranded, linear DNA. It also seems to bind ATP. The chain is DNA replication and repair protein RecF from Latilactobacillus sakei subsp. sakei (strain 23K) (Lactobacillus sakei subsp. sakei).